We begin with the raw amino-acid sequence, 282 residues long: Ribosomal RNA small subunit methyltransferase A (282 aa).

S-adenosyl-L-methionine-binding residues include histidine 15, leucine 17, glycine 42, glutamate 64, aspartate 89, and asparagine 109.

This sequence belongs to the class I-like SAM-binding methyltransferase superfamily. rRNA adenine N(6)-methyltransferase family. RsmA subfamily.

Its subcellular location is the cytoplasm. It carries out the reaction adenosine(1518)/adenosine(1519) in 16S rRNA + 4 S-adenosyl-L-methionine = N(6)-dimethyladenosine(1518)/N(6)-dimethyladenosine(1519) in 16S rRNA + 4 S-adenosyl-L-homocysteine + 4 H(+). Specifically dimethylates two adjacent adenosines (A1518 and A1519) in the loop of a conserved hairpin near the 3'-end of 16S rRNA in the 30S particle. May play a critical role in biogenesis of 30S subunits. The sequence is that of Ribosomal RNA small subunit methyltransferase A from Prochlorococcus marinus (strain MIT 9211).